Consider the following 265-residue polypeptide: Tryptophan synthase alpha chain (265 aa).

Active-site proton acceptor residues include E49 and D60.

The protein belongs to the TrpA family. As to quaternary structure, tetramer of two alpha and two beta chains.

The enzyme catalyses (1S,2R)-1-C-(indol-3-yl)glycerol 3-phosphate + L-serine = D-glyceraldehyde 3-phosphate + L-tryptophan + H2O. The protein operates within amino-acid biosynthesis; L-tryptophan biosynthesis; L-tryptophan from chorismate: step 5/5. In terms of biological role, the alpha subunit is responsible for the aldol cleavage of indoleglycerol phosphate to indole and glyceraldehyde 3-phosphate. In Desulfatibacillum aliphaticivorans, this protein is Tryptophan synthase alpha chain.